Reading from the N-terminus, the 132-residue chain is ATP synthase epsilon chain (132 aa).

The protein belongs to the ATPase epsilon chain family. As to quaternary structure, F-type ATPases have 2 components, CF(1) - the catalytic core - and CF(0) - the membrane proton channel. CF(1) has five subunits: alpha(3), beta(3), gamma(1), delta(1), epsilon(1). CF(0) has three main subunits: a, b and c.

The protein resides in the cell inner membrane. Produces ATP from ADP in the presence of a proton gradient across the membrane. This Cereibacter sphaeroides (strain ATCC 17025 / ATH 2.4.3) (Rhodobacter sphaeroides) protein is ATP synthase epsilon chain.